We begin with the raw amino-acid sequence, 917 residues long: Spermatogenesis-associated protein 31D4 (917 aa).

A helical membrane pass occupies residues 29-49 (FICLSGLGLFILYLFYMVLTL). Disordered stretches follow at residues 55 to 80 (EKNN…KDRK), 152 to 195 (SVSP…PPPL), and 773 to 798 (SQET…RSNS). The span at 63–74 (HQGRARRKRKSV) shows a compositional bias: basic residues. The segment covering 152-163 (SVSPLASSASGA) has biased composition (low complexity). The span at 164–177 (ESSFTLASTPSATT) shows a compositional bias: polar residues. Over residues 782 to 798 (LLHDPETSSDEDLRSNS) the composition is skewed to basic and acidic residues.

Belongs to the SPATA31 family.

It localises to the membrane. In terms of biological role, may play a role in spermatogenesis. The sequence is that of Spermatogenesis-associated protein 31D4 (SPATA31D4) from Homo sapiens (Human).